The sequence spans 295 residues: Phosphatidylserine decarboxylase proenzyme (295 aa).

Active-site charge relay system; for autoendoproteolytic cleavage activity residues include D101, H158, and S262. S262 (schiff-base intermediate with substrate; via pyruvic acid; for decarboxylase activity) is an active-site residue. Position 262 is a pyruvic acid (Ser); by autocatalysis (S262).

It belongs to the phosphatidylserine decarboxylase family. PSD-B subfamily. Prokaryotic type I sub-subfamily. As to quaternary structure, heterodimer of a large membrane-associated beta subunit and a small pyruvoyl-containing alpha subunit. It depends on pyruvate as a cofactor. Is synthesized initially as an inactive proenzyme. Formation of the active enzyme involves a self-maturation process in which the active site pyruvoyl group is generated from an internal serine residue via an autocatalytic post-translational modification. Two non-identical subunits are generated from the proenzyme in this reaction, and the pyruvate is formed at the N-terminus of the alpha chain, which is derived from the carboxyl end of the proenzyme. The autoendoproteolytic cleavage occurs by a canonical serine protease mechanism, in which the side chain hydroxyl group of the serine supplies its oxygen atom to form the C-terminus of the beta chain, while the remainder of the serine residue undergoes an oxidative deamination to produce ammonia and the pyruvoyl prosthetic group on the alpha chain. During this reaction, the Ser that is part of the protease active site of the proenzyme becomes the pyruvoyl prosthetic group, which constitutes an essential element of the active site of the mature decarboxylase.

It is found in the cell membrane. The enzyme catalyses a 1,2-diacyl-sn-glycero-3-phospho-L-serine + H(+) = a 1,2-diacyl-sn-glycero-3-phosphoethanolamine + CO2. The protein operates within phospholipid metabolism; phosphatidylethanolamine biosynthesis; phosphatidylethanolamine from CDP-diacylglycerol: step 2/2. In terms of biological role, catalyzes the formation of phosphatidylethanolamine (PtdEtn) from phosphatidylserine (PtdSer). This chain is Phosphatidylserine decarboxylase proenzyme, found in Pasteurella multocida (strain Pm70).